The chain runs to 284 residues: D-tagatose-1,6-bisphosphate aldolase subunit GatY (284 aa).

The active-site Proton donor is Asp82. Positions 83 and 180 each coordinate Zn(2+). Residue Gly181 coordinates dihydroxyacetone phosphate. His208 provides a ligand contact to Zn(2+). Dihydroxyacetone phosphate-binding positions include 209–211 (GAS) and 230–233 (NVAT).

Belongs to the class II fructose-bisphosphate aldolase family. TagBP aldolase GatY subfamily. As to quaternary structure, forms a complex with GatZ. The cofactor is Zn(2+).

The enzyme catalyses D-tagatofuranose 1,6-bisphosphate = D-glyceraldehyde 3-phosphate + dihydroxyacetone phosphate. Its pathway is carbohydrate metabolism; D-tagatose 6-phosphate degradation; D-glyceraldehyde 3-phosphate and glycerone phosphate from D-tagatose 6-phosphate: step 2/2. Its function is as follows. Catalytic subunit of the tagatose-1,6-bisphosphate aldolase GatYZ, which catalyzes the reversible aldol condensation of dihydroxyacetone phosphate (DHAP or glycerone-phosphate) with glyceraldehyde 3-phosphate (G3P) to produce tagatose 1,6-bisphosphate (TBP). Requires GatZ subunit for full activity and stability. Is involved in the catabolism of galactitol. The polypeptide is D-tagatose-1,6-bisphosphate aldolase subunit GatY (Escherichia coli (strain K12 / MC4100 / BW2952)).